The following is a 199-amino-acid chain: uncharacterized protein (199 aa).

Residues 112–160 (PKSLGYRVLSQYGWSPQGDTAGLGLENQGRRAPVRAFRVKNDTIGLGTK) enclose the G-patch domain.

This is an uncharacterized protein from Schizosaccharomyces pombe (strain 972 / ATCC 24843) (Fission yeast).